The primary structure comprises 582 residues: La-related protein 7 (582 aa).

Met-1 is subject to N-acetylmethionine. Positions 1-27 (METESGNQEKVMEEESTEKKKEVEKKK) are disordered. The segment covering 10–25 (KVMEEESTEKKKEVEK) has biased composition (basic and acidic residues). The HTH La-type RNA-binding domain maps to 28 to 122 (RSRVKQVLAD…KPLGERPKDE (95 aa)). Residues 125–203 (RTVYVELLPK…PRKPGIFPKT (79 aa)) enclose the RRM domain. 2 disordered regions span residues 188–368 (NPPE…ERHK) and 410–442 (KSESEMETDSGVPQNTGMKNEKTANREECRTQE). Positions 219–228 (KKKKKKKGRM) are enriched in basic residues. Residues 229–240 (KKEDNIQAKEEN) show a composition bias toward basic and acidic residues. Residue Lys-237 forms a Glycyl lysine isopeptide (Lys-Gly) (interchain with G-Cter in SUMO2) linkage. Thr-257 bears the Phosphothreonine mark. Phosphoserine occurs at positions 258, 261, 273, 298, 299, and 300. A compositionally biased stretch (basic and acidic residues) spans 316 to 335 (IQKDIIKEASEASKENRDIE). The residue at position 337 (Ser-337) is a Phosphoserine. Position 338 is a phosphothreonine (Thr-338). The residue at position 351 (Ser-351) is a Phosphoserine. Basic residues predominate over residues 354-367 (KTKRKHKKKHKERH). Lys-410 is covalently cross-linked (Glycyl lysine isopeptide (Lys-Gly) (interchain with G-Cter in SUMO2)). Residues 428–442 (KNEKTANREECRTQE) are compositionally biased toward basic and acidic residues. The xRRM domain occupies 450–563 (QFVSGVIVKI…TEKLITKAEK (114 aa)).

This sequence belongs to the LARP7 family. In terms of assembly, core component of the 7SK RNP complex, at least composed of 7SK RNA, LARP7, MEPCE, HEXIM1 (or HEXIM2) and P-TEFb (composed of CDK9 and CCNT1/cyclin-T1). Interacts with METTL16. Interacts with RBM7; upon genotoxic stress this interaction is enhanced, triggering the release of inactive P-TEFb complex from the core, yielding to P-TEFb complex activation. Associates with box C/D small nucleolar ribonucleoprotein (snoRNP) complexes.

It localises to the nucleus. It is found in the nucleoplasm. Its function is as follows. RNA-binding protein that specifically binds distinct small nuclear RNA (snRNAs) and regulates their processing and function. Specifically binds the 7SK snRNA (7SK RNA) and acts as a core component of the 7SK ribonucleoprotein (RNP) complex, thereby acting as a negative regulator of transcription elongation by RNA polymerase II. The 7SK RNP complex sequesters the positive transcription elongation factor b (P-TEFb) in a large inactive 7SK RNP complex preventing RNA polymerase II phosphorylation and subsequent transcriptional elongation. The 7SK RNP complex also promotes snRNA gene transcription by RNA polymerase II via interaction with the little elongation complex (LEC). LARP7 specifically binds to the highly conserved 3'-terminal U-rich stretch of 7SK RNA; on stimulation, remains associated with 7SK RNA, whereas P-TEFb is released from the complex. LARP7 also acts as a regulator of mRNA splicing fidelity by promoting U6 snRNA processing. Specifically binds U6 snRNAs and associates with a subset of box C/D RNP complexes: promotes U6 snRNA 2'-O-methylation by facilitating U6 snRNA loading into box C/D RNP complexes. U6 snRNA 2'-O-methylation is required for mRNA splicing fidelity. Binds U6 snRNAs with a 5'-CAGGG-3' sequence motif. U6 snRNA processing is required for spermatogenesis. This Homo sapiens (Human) protein is La-related protein 7.